The primary structure comprises 353 residues: Protein-glutamate methylesterase/protein-glutamine glutaminase (353 aa).

The Response regulatory domain occupies 6 to 123 (RVLVIDDSAL…ARGLKAMLSE (118 aa)). Aspartate 57 bears the 4-aspartylphosphate mark. A CheB-type methylesterase domain is found at 159–351 (AESTDKVIAI…PRIVDLLSER (193 aa)). Active-site residues include serine 171, histidine 197, and aspartate 293.

It belongs to the CheB family. In terms of processing, phosphorylated by CheA. Phosphorylation of the N-terminal regulatory domain activates the methylesterase activity.

The protein resides in the cytoplasm. It carries out the reaction [protein]-L-glutamate 5-O-methyl ester + H2O = L-glutamyl-[protein] + methanol + H(+). It catalyses the reaction L-glutaminyl-[protein] + H2O = L-glutamyl-[protein] + NH4(+). Involved in chemotaxis. Part of a chemotaxis signal transduction system that modulates chemotaxis in response to various stimuli. Catalyzes the demethylation of specific methylglutamate residues introduced into the chemoreceptors (methyl-accepting chemotaxis proteins or MCP) by CheR. Also mediates the irreversible deamidation of specific glutamine residues to glutamic acid. In Syntrophotalea carbinolica (strain DSM 2380 / NBRC 103641 / GraBd1) (Pelobacter carbinolicus), this protein is Protein-glutamate methylesterase/protein-glutamine glutaminase.